The following is a 335-amino-acid chain: Holliday junction branch migration complex subunit RuvB (335 aa).

Residues 1 to 181 (MERIIEIEKM…FGMNFWMQFY (181 aa)) form a large ATPase domain (RuvB-L) region. ATP-binding positions include Leu20, Arg21, Gly62, Lys65, Thr66, Thr67, 128-130 (EDF), Arg171, Tyr181, and Arg218. Thr66 is a Mg(2+) binding site. The tract at residues 182 to 252 (NIEELSQIIT…QARYALHELG (71 aa)) is small ATPAse domain (RuvB-S). The interval 255-335 (DHGFDDLDLR…LPFEPNATLF (81 aa)) is head domain (RuvB-H). DNA contacts are provided by Arg309 and Arg314.

The protein belongs to the RuvB family. In terms of assembly, homohexamer. Forms an RuvA(8)-RuvB(12)-Holliday junction (HJ) complex. HJ DNA is sandwiched between 2 RuvA tetramers; dsDNA enters through RuvA and exits via RuvB. An RuvB hexamer assembles on each DNA strand where it exits the tetramer. Each RuvB hexamer is contacted by two RuvA subunits (via domain III) on 2 adjacent RuvB subunits; this complex drives branch migration. In the full resolvosome a probable DNA-RuvA(4)-RuvB(12)-RuvC(2) complex forms which resolves the HJ.

It localises to the cytoplasm. The catalysed reaction is ATP + H2O = ADP + phosphate + H(+). In terms of biological role, the RuvA-RuvB-RuvC complex processes Holliday junction (HJ) DNA during genetic recombination and DNA repair, while the RuvA-RuvB complex plays an important role in the rescue of blocked DNA replication forks via replication fork reversal (RFR). RuvA specifically binds to HJ cruciform DNA, conferring on it an open structure. The RuvB hexamer acts as an ATP-dependent pump, pulling dsDNA into and through the RuvAB complex. RuvB forms 2 homohexamers on either side of HJ DNA bound by 1 or 2 RuvA tetramers; 4 subunits per hexamer contact DNA at a time. Coordinated motions by a converter formed by DNA-disengaged RuvB subunits stimulates ATP hydrolysis and nucleotide exchange. Immobilization of the converter enables RuvB to convert the ATP-contained energy into a lever motion, pulling 2 nucleotides of DNA out of the RuvA tetramer per ATP hydrolyzed, thus driving DNA branch migration. The RuvB motors rotate together with the DNA substrate, which together with the progressing nucleotide cycle form the mechanistic basis for DNA recombination by continuous HJ branch migration. Branch migration allows RuvC to scan DNA until it finds its consensus sequence, where it cleaves and resolves cruciform DNA. In Wolinella succinogenes (strain ATCC 29543 / DSM 1740 / CCUG 13145 / JCM 31913 / LMG 7466 / NCTC 11488 / FDC 602W) (Vibrio succinogenes), this protein is Holliday junction branch migration complex subunit RuvB.